The primary structure comprises 257 residues: Protein windbeutel (257 aa).

The N-terminal stretch at 1 to 21 (MMHILVTLLLVAIHSIPTTWA) is a signal peptide. The segment at 24–27 (CTGC) is CXXC motif. The short motif at 254–257 (KEEL) is the Prevents secretion from ER element.

As to quaternary structure, homodimer. Interacts with pip; the interaction is direct and does not require pip to be folded. As to expression, briefly expressed in the follicle cells of the ovary, at around the time when the dorsoventral axis of the egg chamber is first established.

The protein localises to the endoplasmic reticulum lumen. Probable chaperone protein involved in dorsoventral axis patterning in early embryos. Probably acts by folding and targeting pipe (pip) into the Golgi. The polypeptide is Protein windbeutel (Drosophila melanogaster (Fruit fly)).